The following is an 830-amino-acid chain: Lon protease (830 aa).

The 196-residue stretch at 20–215 (LPAVAIRDVV…LLIKILANEV (196 aa)) folds into the Lon N-terminal domain. 367–374 (GPPGVGKT) is an ATP binding site. The Lon proteolytic domain occupies 602 to 781 (ENGVGISTGL…DEIVKIAFEK (180 aa)). Residues S687 and K730 contribute to the active site. The disordered stretch occupies residues 784-830 (PKSSFKKSKTAPKKESAKKAAKSKKPAVKKPAVKKTKQVKKTAKKKK). Basic residues predominate over residues 802 to 830 (KAAKSKKPAVKKPAVKKTKQVKKTAKKKK).

It belongs to the peptidase S16 family. As to quaternary structure, homohexamer. Organized in a ring with a central cavity.

It is found in the cytoplasm. The enzyme catalyses Hydrolysis of proteins in presence of ATP.. In terms of biological role, ATP-dependent serine protease that mediates the selective degradation of mutant and abnormal proteins as well as certain short-lived regulatory proteins. Required for cellular homeostasis and for survival from DNA damage and developmental changes induced by stress. Degrades polypeptides processively to yield small peptide fragments that are 5 to 10 amino acids long. Binds to DNA in a double-stranded, site-specific manner. The protein is Lon protease of Elusimicrobium minutum (strain Pei191).